A 156-amino-acid chain; its full sequence is ATP synthase subunit b 2 (156 aa).

The chain crosses the membrane as a helical span at residues 7 to 29; it reads LLGQAISFAIFVWFCMKYVWPPV.

It belongs to the ATPase B chain family. As to quaternary structure, F-type ATPases have 2 components, F(1) - the catalytic core - and F(0) - the membrane proton channel. F(1) has five subunits: alpha(3), beta(3), gamma(1), delta(1), epsilon(1). F(0) has three main subunits: a(1), b(2) and c(10-14). The alpha and beta chains form an alternating ring which encloses part of the gamma chain. F(1) is attached to F(0) by a central stalk formed by the gamma and epsilon chains, while a peripheral stalk is formed by the delta and b chains.

It is found in the cell inner membrane. F(1)F(0) ATP synthase produces ATP from ADP in the presence of a proton or sodium gradient. F-type ATPases consist of two structural domains, F(1) containing the extramembraneous catalytic core and F(0) containing the membrane proton channel, linked together by a central stalk and a peripheral stalk. During catalysis, ATP synthesis in the catalytic domain of F(1) is coupled via a rotary mechanism of the central stalk subunits to proton translocation. Its function is as follows. Component of the F(0) channel, it forms part of the peripheral stalk, linking F(1) to F(0). The polypeptide is ATP synthase subunit b 2 (Marinomonas sp. (strain MWYL1)).